We begin with the raw amino-acid sequence, 329 residues long: Prostaglandin reductase 1 (329 aa).

Thr-18 carries the post-translational modification Phosphothreonine. At Ser-20 the chain carries Phosphoserine. NADP(+) is bound by residues 152–155 (GAVG), Lys-178, Tyr-193, Asn-217, 239–245 (CGAISTY), 270–272 (FIV), and Asn-321. At Lys-178 the chain carries N6-(2-hydroxyisobutyryl)lysine; alternate. At Lys-178 the chain carries N6-acetyllysine; alternate.

This sequence belongs to the NADP-dependent oxidoreductase L4BD family. In terms of assembly, monomer or homodimer. Ubiquitously distributed in various tissues and leukocytes, the kidney and liver had the highest enzyme activities.

The protein resides in the cytoplasm. The catalysed reaction is 13,14-dihydro-15-oxo-prostaglandin E1 + NADP(+) = 15-oxoprostaglandin E1 + NADPH + H(+). It carries out the reaction 13,14-dihydro-15-oxo-prostaglandin E2 + NADP(+) = 15-oxoprostaglandin E2 + NADPH + H(+). It catalyses the reaction 13,14-dihydro-15-oxo-prostaglandin E2 + NAD(+) = 15-oxoprostaglandin E2 + NADH + H(+). The enzyme catalyses 13,14-dihydro-15-oxo-prostaglandin F1alpha + NADP(+) = 15-oxoprostaglandin F1alpha + NADPH + H(+). The catalysed reaction is 13,14-dihydro-15-oxo-PGF2alpha + NADP(+) = 15-oxoprostaglandin F2alpha + NADPH + H(+). It carries out the reaction leukotriene B4 + NADP(+) = 12-oxo-leukotriene B4 + NADPH + H(+). It catalyses the reaction 20-hydroxy-leukotriene B4 + NADP(+) = 12-oxo-20-hydroxy-leukotriene B4 + NADPH + H(+). The enzyme catalyses 6-trans-leukotriene B4 + NADP(+) = 12-oxo-(5S)-hydroxy-(6E,8E,10E,14Z)-eicosatetraenoate + NADPH + H(+). The catalysed reaction is (5S,12S)-dihydroxy-(6E,10E,12E,14Z)-eicosatetraenoate + NADP(+) = 12-oxo-(5S)-hydroxy-(6E,8E,10E,14Z)-eicosatetraenoate + NADPH + H(+). It carries out the reaction 15-oxo-(5S,6R)-dihydroxy-(7E,9E,11Z,13E)-eicosatetraenoate + NADH + H(+) = 15-oxo-(5S,6R)-dihydroxy-(7E,9E,11Z)-eicosatrienoate + NAD(+). It catalyses the reaction an n-alkanal + NADP(+) = an alk-2-enal + NADPH + H(+). The enzyme catalyses hexanal + NADP(+) = (E)-hex-2-enal + NADPH + H(+). The catalysed reaction is octanal + NADP(+) = (2E)-octenal + NADPH + H(+). It carries out the reaction decanal + NADP(+) = (2E)-decenal + NADPH + H(+). It catalyses the reaction dodecanal + NADP(+) = (2E)-dodecenal + NADPH + H(+). The enzyme catalyses 4-hydroxynonanal + NADP(+) = (E)-4-hydroxynon-2-enal + NADPH + H(+). The catalysed reaction is pentan-2-one + NADP(+) = (E)-pent-3-en-2-one + NADPH + H(+). It carries out the reaction nonan-2-one + NADP(+) = (3E)-nonen-2-one + NADPH + H(+). Its activity is regulated as follows. Down-regulated by nonsteroidal anti-inflammatory drugs diclofenac, indomethacin and niflumic acid. NAD(P)H-dependent oxidoreductase involved in metabolic inactivation of pro- and anti-inflammatory eicosanoids: prostaglandins (PG), leukotrienes (LT) and lipoxins (LX). Preferentially uses NADPH over NADH as cofactor. Catalyzes with high efficiency the reduction of the 13,14 double bond of 15-oxoPGs, including 15-oxo-PGE1, 15-oxo-PGE2, 15-oxo-PGF1-alpha and 15-oxo-PGF2-alpha. Catalyzes with lower efficiency the oxidation of the hydroxyl group at C12 of LTB4 and its derivatives, converting them into biologically less active 12-oxo-LTB4 metabolites. Reduces 15-oxo-LXA4 to 13,14 dihydro-15-oxo-LXA4 and may promote neutrophil recruitment at the inflammatory site. Plays a role in metabolic detoxification of alkenals and ketones. Reduces alpha,beta-unsaturated alkenals and ketones, particularly those with medium-chain length, showing highest affinity toward (2E)-decenal and (3E)-3-nonen-2-one. May inactivate 4-hydroxy-2-nonenal, a cytotoxic lipid constituent of oxidized low-density lipoprotein particles. In Sus scrofa (Pig), this protein is Prostaglandin reductase 1 (PTGR1).